The sequence spans 178 residues: MKINEFIVVEGRDDTERVKRAVECDTIETNGSAINEQTLEVIRNAQQSRGVIVLTDPDFPGDKIRSTITEHVKGVKHAYIDREKAKNKKGKIGVEHADLIDIKEALMHVSSPFDEAYESIDKSVLIELGLIVGKDARRRREILSRKLRIGHSNGKQLLKKLNAFGYTEADVRQALEDE.

Residues 4–100 (NEFIVVEGRD…KIGVEHADLI (97 aa)) form the Toprim domain. The Mg(2+) site is built by glutamate 10, aspartate 56, and aspartate 58.

This sequence belongs to the ribonuclease M5 family. It depends on Mg(2+) as a cofactor.

The protein resides in the cytoplasm. It catalyses the reaction Endonucleolytic cleavage of RNA, removing 21 and 42 nucleotides, respectively, from the 5'- and 3'-termini of a 5S-rRNA precursor.. In terms of biological role, required for correct processing of both the 5' and 3' ends of 5S rRNA precursor. Cleaves both sides of a double-stranded region yielding mature 5S rRNA in one step. The polypeptide is Ribonuclease M5 (Staphylococcus aureus (strain NCTC 8325 / PS 47)).